Here is a 104-residue protein sequence, read N- to C-terminus: MAVKIKRDDQVIVITGKDKGKTGTIKTVLSNGKIIIEGVNTVKKHQKPNPQADVAGGIIEQSAPMQISNVAILNSATGKADRVGFRLEDGKKVRFFKSNNELVK.

The protein belongs to the universal ribosomal protein uL24 family. In terms of assembly, part of the 50S ribosomal subunit.

In terms of biological role, one of two assembly initiator proteins, it binds directly to the 5'-end of the 23S rRNA, where it nucleates assembly of the 50S subunit. One of the proteins that surrounds the polypeptide exit tunnel on the outside of the subunit. This Psychromonas ingrahamii (strain DSM 17664 / CCUG 51855 / 37) protein is Large ribosomal subunit protein uL24.